The following is a 341-amino-acid chain: Antihemorrhagic factor BJ46a (341 aa).

A signal peptide spans 1-19 (MNSLVALVLLGQIIGSTLS). Cystatin fetuin-A-type domains are found at residues 22–130 (VRGD…AKCH) and 141–254 (RNCP…SDCV). The Cell attachment site signature appears at 23–25 (RGD). Intrachain disulfides connect Cys-28–Cys-332, Cys-85–Cys-96, Cys-110–Cys-129, Cys-143–Cys-146, Cys-205–Cys-217, and Cys-230–Cys-253. N-linked (GlcNAc...) asparagine glycosylation is present at Asn-95. Asn-204 is a glycosylation site (N-linked (GlcNAc...) asparagine). Asn-282 and Asn-293 each carry an N-linked (GlcNAc...) asparagine glycan.

As to quaternary structure, homodimer. Expressed by the liver.

Its subcellular location is the secreted. In terms of biological role, potent inhibitor of hemorrhagic activity but also proteolytic activities of atrolysin C and jararhagin. Inhibition occurs by formation of a non-covalent complex between BJ46a and the proteinases at their metalloproteinase domains. This Bothrops jararaca (Jararaca) protein is Antihemorrhagic factor BJ46a.